We begin with the raw amino-acid sequence, 1005 residues long: Pikachurin (1005 aa).

The signal sequence occupies residues 1–24 (MDLISTFLLHFLLLACSLPPGAVS). 2 consecutive Fibronectin type-III domains span residues 37–136 (PPLD…TLSQ) and 144–239 (APHQ…TLGP). N-linked (GlcNAc...) asparagine glycosylation occurs at N47. The disordered stretch occupies residues 281-328 (PATKVGNKKSKKTSVSNSEMDSRLAQPTSASLPETTVAVPPTPAQRKG). The span at 305–314 (AQPTSASLPE) shows a compositional bias: polar residues. One can recognise an EGF-like 1 domain in the interval 339 to 377 (FDMSCDETLCSADSFCVNDYAWGGSRCHCNLGKGGEACS). Cystine bridges form between C343–C354, C348–C365, C367–C376, C530–C560, C565–C576, C570–C586, C588–C597, C784–C795, C789–C804, C806–C815, and C975–C1002. A Laminin G-like 1 domain is found at 382 to 560 (IQYPQFFGHS…ALNGADVGEC (179 aa)). EGF-like domains follow at residues 561–598 (SSGI…RHCE) and 780–816 (AAHP…LNCQ). The Laminin G-like 2 domain maps to 605–784 (IPQFRESLRS…VNVENAAHPC (180 aa)). The region spanning 823 to 1002 (IEIPQFIGRS…AVDGKNINTC (180 aa)) is the Laminin G-like 3 domain.

As to quaternary structure, interacts with DAG1 alpha-dystroglycan. Interacts with GPR158 and GPR179; transsynaptic interaction is required for synaptic organization of photoreceptor cells. O-glycosylated; contains chondroitin sulfate and heparan sulfate.

It localises to the secreted. It is found in the extracellular space. The protein localises to the extracellular matrix. The protein resides in the synaptic cleft. Its subcellular location is the presynaptic active zone. Functionally, involved in both the retinal photoreceptor ribbon synapse formation and physiological functions of visual perception. Plays a key role in the synaptic organization of photoreceptors by mediating transsynaptic interaction between alpha-dystroglycan and GPR179 on the postsynaptic membrane. Necessary for proper bipolar dendritic tip apposition to the photoreceptor ribbon synapse. Promotes matrix assembly and cell adhesiveness. The chain is Pikachurin (Egflam) from Rattus norvegicus (Rat).